The chain runs to 464 residues: Soluble pyridine nucleotide transhydrogenase (464 aa).

An FAD-binding site is contributed by 35–44 (DSRRQVGGNC).

This sequence belongs to the class-I pyridine nucleotide-disulfide oxidoreductase family. It depends on FAD as a cofactor.

The protein localises to the cytoplasm. It carries out the reaction NAD(+) + NADPH = NADH + NADP(+). Its function is as follows. Conversion of NADPH, generated by peripheral catabolic pathways, to NADH, which can enter the respiratory chain for energy generation. The protein is Soluble pyridine nucleotide transhydrogenase of Pseudomonas fluorescens (strain SBW25).